We begin with the raw amino-acid sequence, 267 residues long: Thiazole synthase (267 aa).

The Schiff-base intermediate with DXP role is filled by Lys110. Residues Gly171, Ala197–Gly198, and Asn219–Thr220 each bind 1-deoxy-D-xylulose 5-phosphate.

It belongs to the ThiG family. In terms of assembly, homotetramer. Forms heterodimers with either ThiH or ThiS.

It localises to the cytoplasm. It carries out the reaction [ThiS sulfur-carrier protein]-C-terminal-Gly-aminoethanethioate + 2-iminoacetate + 1-deoxy-D-xylulose 5-phosphate = [ThiS sulfur-carrier protein]-C-terminal Gly-Gly + 2-[(2R,5Z)-2-carboxy-4-methylthiazol-5(2H)-ylidene]ethyl phosphate + 2 H2O + H(+). It functions in the pathway cofactor biosynthesis; thiamine diphosphate biosynthesis. Functionally, catalyzes the rearrangement of 1-deoxy-D-xylulose 5-phosphate (DXP) to produce the thiazole phosphate moiety of thiamine. Sulfur is provided by the thiocarboxylate moiety of the carrier protein ThiS. In vitro, sulfur can be provided by H(2)S. This is Thiazole synthase from Maricaulis maris (strain MCS10) (Caulobacter maris).